Reading from the N-terminus, the 89-residue chain is MSVADIKKSEVVAQFARGTNDTGSPEVQVALLTARIVELTGHFKTHAKDHHSRRGLLRMVSRRRKLLDYLKGKDADRYRALIEKLGLRK.

The protein belongs to the universal ribosomal protein uS15 family. As to quaternary structure, part of the 30S ribosomal subunit. Forms a bridge to the 50S subunit in the 70S ribosome, contacting the 23S rRNA.

One of the primary rRNA binding proteins, it binds directly to 16S rRNA where it helps nucleate assembly of the platform of the 30S subunit by binding and bridging several RNA helices of the 16S rRNA. In terms of biological role, forms an intersubunit bridge (bridge B4) with the 23S rRNA of the 50S subunit in the ribosome. The sequence is that of Small ribosomal subunit protein uS15 from Burkholderia ambifaria (strain MC40-6).